Reading from the N-terminus, the 563-residue chain is Dihydroxy-acid dehydratase (563 aa).

[2Fe-2S] cluster is bound at residue cysteine 50. Aspartate 82 is a binding site for Mg(2+). Cysteine 123 is a binding site for [2Fe-2S] cluster. 2 residues coordinate Mg(2+): aspartate 124 and lysine 125. Lysine 125 is modified (N6-carboxylysine). Cysteine 195 is a [2Fe-2S] cluster binding site. Glutamate 447 is a binding site for Mg(2+). Serine 473 acts as the Proton acceptor in catalysis.

It belongs to the IlvD/Edd family. In terms of assembly, homodimer. The cofactor is [2Fe-2S] cluster. Mg(2+) serves as cofactor.

The enzyme catalyses (2R)-2,3-dihydroxy-3-methylbutanoate = 3-methyl-2-oxobutanoate + H2O. It carries out the reaction (2R,3R)-2,3-dihydroxy-3-methylpentanoate = (S)-3-methyl-2-oxopentanoate + H2O. It functions in the pathway amino-acid biosynthesis; L-isoleucine biosynthesis; L-isoleucine from 2-oxobutanoate: step 3/4. It participates in amino-acid biosynthesis; L-valine biosynthesis; L-valine from pyruvate: step 3/4. In terms of biological role, functions in the biosynthesis of branched-chain amino acids. Catalyzes the dehydration of (2R,3R)-2,3-dihydroxy-3-methylpentanoate (2,3-dihydroxy-3-methylvalerate) into 2-oxo-3-methylpentanoate (2-oxo-3-methylvalerate) and of (2R)-2,3-dihydroxy-3-methylbutanoate (2,3-dihydroxyisovalerate) into 2-oxo-3-methylbutanoate (2-oxoisovalerate), the penultimate precursor to L-isoleucine and L-valine, respectively. This Nostoc sp. (strain PCC 7120 / SAG 25.82 / UTEX 2576) protein is Dihydroxy-acid dehydratase.